A 192-amino-acid polypeptide reads, in one-letter code: Ribose 1,5-bisphosphate phosphokinase PhnN (192 aa).

Gly15–Asp22 lines the ATP pocket.

Belongs to the ribose 1,5-bisphosphokinase family.

The catalysed reaction is alpha-D-ribose 1,5-bisphosphate + ATP = 5-phospho-alpha-D-ribose 1-diphosphate + ADP. The protein operates within metabolic intermediate biosynthesis; 5-phospho-alpha-D-ribose 1-diphosphate biosynthesis; 5-phospho-alpha-D-ribose 1-diphosphate from D-ribose 5-phosphate (route II): step 3/3. Catalyzes the phosphorylation of ribose 1,5-bisphosphate to 5-phospho-D-ribosyl alpha-1-diphosphate (PRPP). The polypeptide is Ribose 1,5-bisphosphate phosphokinase PhnN (Brucella abortus biovar 1 (strain 9-941)).